The chain runs to 127 residues: Glycine cleavage system H protein (127 aa).

A Lipoyl-binding domain is found at 23 to 104; it reads TALVGLTDYA…PYEAWFAKIT (82 aa). An N6-lipoyllysine modification is found at lysine 64.

It belongs to the GcvH family. In terms of assembly, the glycine cleavage system is composed of four proteins: P, T, L and H. (R)-lipoate is required as a cofactor.

Its function is as follows. The glycine cleavage system catalyzes the degradation of glycine. The H protein shuttles the methylamine group of glycine from the P protein to the T protein. This Lachnoclostridium phytofermentans (strain ATCC 700394 / DSM 18823 / ISDg) (Clostridium phytofermentans) protein is Glycine cleavage system H protein.